Consider the following 563-residue polypeptide: Inositol-3-phosphate synthase 1-B (563 aa).

It belongs to the myo-inositol 1-phosphate synthase family. NAD(+) is required as a cofactor.

Its subcellular location is the cytoplasm. It catalyses the reaction D-glucose 6-phosphate = 1D-myo-inositol 3-phosphate. It participates in polyol metabolism; myo-inositol biosynthesis; myo-inositol from D-glucose 6-phosphate: step 1/2. Its function is as follows. Key enzyme in myo-inositol biosynthesis pathway that catalyzes the conversion of glucose 6-phosphate to 1-myo-inositol 1-phosphate in a NAD-dependent manner. Rate-limiting enzyme in the synthesis of all inositol-containing compounds. The polypeptide is Inositol-3-phosphate synthase 1-B (isyna1-b) (Xenopus laevis (African clawed frog)).